The chain runs to 336 residues: E3 ubiquitin-protein ligase RING2 (336 aa).

The interval 2-179 (TQTVQTNGVQ…AEDNGDSSHC (178 aa)) is interaction with HIP2. An RING-type zinc finger spans residues 51 to 91 (CPICLDMLKNTMTTKECLHRFCADCIITALRSGNKECPTCR). An interaction with nucleosomes via an acidic patch on histone H2A and histone H2B region spans residues 93–98 (KLVSKR). The segment at 158-218 (RGKKHQIENG…NATENGGGDI (61 aa)) is disordered. Over residues 176–190 (SSHCSNASVHSNQEA) the composition is skewed to polar residues.

As to quaternary structure, component of chromatin-associated Polycomb (PcG) complexes. Component of a PRC1-like complex. Component of some MLL1/MLL complex.

Its subcellular location is the nucleus. The protein localises to the cytoplasm. It is found in the chromosome. It catalyses the reaction S-ubiquitinyl-[E2 ubiquitin-conjugating enzyme]-L-cysteine + [acceptor protein]-L-lysine = [E2 ubiquitin-conjugating enzyme]-L-cysteine + N(6)-ubiquitinyl-[acceptor protein]-L-lysine.. It functions in the pathway protein modification; protein ubiquitination. In terms of biological role, E3 ubiquitin-protein ligase that mediates monoubiquitination of 'Lys-119' of histone H2A (H2AK119Ub), thereby playing a central role in histone code and gene regulation. H2AK119Ub gives a specific tag for epigenetic transcriptional repression. Essential component of a Polycomb group (PcG) multiprotein PRC1-like complex, a complex class required to maintain the transcriptionally repressive state of many genes, including Hox genes, throughout development. PcG PRC1 complex acts via chromatin remodeling and modification of histones, rendering chromatin heritably changed in its expressibility. The sequence is that of E3 ubiquitin-protein ligase RING2 (rnf2) from Danio rerio (Zebrafish).